The sequence spans 356 residues: Protein pelota homolog (356 aa).

The protein belongs to the eukaryotic release factor 1 family. Pelota subfamily. In terms of assembly, monomer. The cofactor is a divalent metal cation.

Its subcellular location is the cytoplasm. In terms of biological role, may function in recognizing stalled ribosomes, interact with stem-loop structures in stalled mRNA molecules, and effect endonucleolytic cleavage of the mRNA. May play a role in the release non-functional ribosomes and degradation of damaged mRNAs. Has endoribonuclease activity. This is Protein pelota homolog from Desulfurococcus amylolyticus (strain DSM 18924 / JCM 16383 / VKM B-2413 / 1221n) (Desulfurococcus kamchatkensis).